The primary structure comprises 129 residues: Glycine cleavage system H protein (129 aa).

The 83-residue stretch at 24–106 folds into the Lipoyl-binding domain; the sequence is TYTVGITEHA…YTDGWIFKIK (83 aa). At Lys65 the chain carries N6-lipoyllysine.

Belongs to the GcvH family. In terms of assembly, the glycine cleavage system is composed of four proteins: P, T, L and H. (R)-lipoate is required as a cofactor.

The glycine cleavage system catalyzes the degradation of glycine. The H protein shuttles the methylamine group of glycine from the P protein to the T protein. The sequence is that of Glycine cleavage system H protein from Klebsiella pneumoniae subsp. pneumoniae (strain ATCC 700721 / MGH 78578).